The sequence spans 109 residues: Thioredoxin 1 (109 aa).

One can recognise a Thioredoxin domain in the interval 2–109 (SDKIIHLTDD…LKEFLDANLA (108 aa)). Catalysis depends on nucleophile residues Cys33 and Cys36. Cysteines 33 and 36 form a disulfide. Lys70 is modified (N6-acetyllysine).

This sequence belongs to the thioredoxin family. As to quaternary structure, monomer.

Functionally, participates in various redox reactions through the reversible oxidation of its active center dithiol to a disulfide and catalyzes dithiol-disulfide exchange reactions. This chain is Thioredoxin 1 (trxA), found in Escherichia coli O157:H7.